The chain runs to 402 residues: S-adenosylmethionine synthase (402 aa).

Position 16 (His16) interacts with ATP. Asp18 is a Mg(2+) binding site. K(+) is bound at residue Glu44. L-methionine-binding residues include Glu57 and Gln103. Residues 103-113 (QSPDIAQGVDT) form a flexible loop region. ATP contacts are provided by residues 178-180 (DGK), 249-250 (KF), Asp258, 264-265 (RK), Ala281, and Lys285. L-methionine is bound at residue Asp258. An L-methionine-binding site is contributed by Lys289.

The protein belongs to the AdoMet synthase family. In terms of assembly, homotetramer; dimer of dimers. Mg(2+) serves as cofactor. K(+) is required as a cofactor.

The protein localises to the cytoplasm. The catalysed reaction is L-methionine + ATP + H2O = S-adenosyl-L-methionine + phosphate + diphosphate. The protein operates within amino-acid biosynthesis; S-adenosyl-L-methionine biosynthesis; S-adenosyl-L-methionine from L-methionine: step 1/1. In terms of biological role, catalyzes the formation of S-adenosylmethionine (AdoMet) from methionine and ATP. The overall synthetic reaction is composed of two sequential steps, AdoMet formation and the subsequent tripolyphosphate hydrolysis which occurs prior to release of AdoMet from the enzyme. This chain is S-adenosylmethionine synthase, found in Mycobacterium sp. (strain JLS).